We begin with the raw amino-acid sequence, 213 residues long: Reticulon-3 (213 aa).

Over residues 1 to 16 (MADTSGPQSSHISSSA) the composition is skewed to polar residues. Residues 1-20 (MADTSGPQSSHISSSAGEKG) are disordered. The region spanning 25 to 213 (VQDLLYWRDV…LPGALKKKSE (189 aa)) is the Reticulon domain. A run of 2 helical transmembrane segments spans residues 45–65 (MVLLLSLAAFSIISVISYLVL) and 154–174 (VFNGITLLILGVLLAFTAPIV).

As to quaternary structure, homodimer.

Its subcellular location is the endoplasmic reticulum membrane. The protein localises to the golgi apparatus membrane. Its function is as follows. May be involved in membrane trafficking in the early secretory pathway. This chain is Reticulon-3 (rtn3), found in Xenopus tropicalis (Western clawed frog).